The sequence spans 593 residues: Arginine--tRNA ligase (593 aa).

Positions A138–H148 match the 'HIGH' region motif.

Belongs to the class-I aminoacyl-tRNA synthetase family. Monomer.

It is found in the cytoplasm. The catalysed reaction is tRNA(Arg) + L-arginine + ATP = L-arginyl-tRNA(Arg) + AMP + diphosphate. The sequence is that of Arginine--tRNA ligase from Burkholderia orbicola (strain MC0-3).